We begin with the raw amino-acid sequence, 66 residues long: Cold shock protein 2 (66 aa).

One can recognise a CSD domain in the interval 4–63 (GTVKWFNADKGFGFITGEDGTDVFVHFSAIQTDGFKTLDEGQKVTYDEEQGDRGPQATNV).

It localises to the cytoplasm. The chain is Cold shock protein 2 (cspL) from Lactiplantibacillus plantarum (strain ATCC BAA-793 / NCIMB 8826 / WCFS1) (Lactobacillus plantarum).